Here is a 233-residue protein sequence, read N- to C-terminus: H-2 class II histocompatibility antigen, A-R alpha chain (233 aa).

Residues 1-88 (EDDIEADHVG…KRSNFTPAAN (88 aa)) form an alpha-1 region. Residues 1–195 (EDDIEADHVG…IPAPMSELTE (195 aa)) are Extracellular-facing. The interval 89-182 (EAPQATVFPK…GLEEPVLKHW (94 aa)) is alpha-2. One can recognise an Ig-like C1-type domain in the interval 91-183 (PQATVFPKSP…LEEPVLKHWE (93 aa)). Cys111 and Cys167 form a disulfide bridge. An N-linked (GlcNAc...) asparagine glycan is attached at Asn122. Positions 183 to 195 (EPEIPAPMSELTE) are connecting peptide. The helical transmembrane segment at 196–221 (TVVCALGLSVGLVGIVVGTIFIIQGL) threads the bilayer. Topologically, residues 222–233 (RSGGTSRHPGPL) are cytoplasmic.

This sequence belongs to the MHC class II family.

The protein resides in the membrane. The polypeptide is H-2 class II histocompatibility antigen, A-R alpha chain (H2-Aa) (Mus musculus (Mouse)).